A 480-amino-acid chain; its full sequence is Cytochrome b-c1 complex subunit 1, mitochondrial (480 aa).

A mitochondrion-targeting transit peptide spans Met1 to Gly34. An N6-acetyllysine mark is found at Lys111 and Lys138. Lys163 carries the post-translational modification N6-acetyllysine; alternate. N6-succinyllysine; alternate is present on Lys163. Ser212 carries the post-translational modification Phosphoserine. Lys248 carries the post-translational modification N6-acetyllysine.

It belongs to the peptidase M16 family. UQCRC1/QCR1 subfamily. In terms of assembly, component of the ubiquinol-cytochrome c oxidoreductase (cytochrome b-c1 complex, complex III, CIII), a multisubunit enzyme composed of 11 subunits. The complex is composed of 3 respiratory subunits cytochrome b, cytochrome c1 and Rieske protein UQCRFS1, 2 core protein subunits UQCRC1/QCR1 and UQCRC2/QCR2, and 6 low-molecular weight protein subunits UQCRH/QCR6, UQCRB/QCR7, UQCRQ/QCR8, UQCR10/QCR9, UQCR11/QCR10 and subunit 9, the cleavage product of Rieske protein UQCRFS1. The complex exists as an obligatory dimer and forms supercomplexes (SCs) in the inner mitochondrial membrane with NADH-ubiquinone oxidoreductase (complex I, CI) and cytochrome c oxidase (complex IV, CIV), resulting in different assemblies (supercomplex SCI(1)III(2)IV(1) and megacomplex MCI(2)III(2)IV(2)). Interacts with UQCC6. Interacts with STMP1.

It localises to the mitochondrion inner membrane. In terms of biological role, component of the ubiquinol-cytochrome c oxidoreductase, a multisubunit transmembrane complex that is part of the mitochondrial electron transport chain which drives oxidative phosphorylation. The respiratory chain contains 3 multisubunit complexes succinate dehydrogenase (complex II, CII), ubiquinol-cytochrome c oxidoreductase (cytochrome b-c1 complex, complex III, CIII) and cytochrome c oxidase (complex IV, CIV), that cooperate to transfer electrons derived from NADH and succinate to molecular oxygen, creating an electrochemical gradient over the inner membrane that drives transmembrane transport and the ATP synthase. The cytochrome b-c1 complex catalyzes electron transfer from ubiquinol to cytochrome c, linking this redox reaction to translocation of protons across the mitochondrial inner membrane, with protons being carried across the membrane as hydrogens on the quinol. In the process called Q cycle, 2 protons are consumed from the matrix, 4 protons are released into the intermembrane space and 2 electrons are passed to cytochrome c. The 2 core subunits UQCRC1/QCR1 and UQCRC2/QCR2 are homologous to the 2 mitochondrial-processing peptidase (MPP) subunits beta-MPP and alpha-MPP respectively, and they seem to have preserved their MPP processing properties. May be involved in the in situ processing of UQCRFS1 into the mature Rieske protein and its mitochondrial targeting sequence (MTS)/subunit 9 when incorporated into complex III. Seems to play an important role in the maintenance of proper mitochondrial function in nigral dopaminergic neurons. The polypeptide is Cytochrome b-c1 complex subunit 1, mitochondrial (UQCRC1) (Bos taurus (Bovine)).